Reading from the N-terminus, the 252-residue chain is Imidazole glycerol phosphate synthase subunit HisF (252 aa).

Residues aspartate 11 and aspartate 130 contribute to the active site.

It belongs to the HisA/HisF family. As to quaternary structure, heterodimer of HisH and HisF.

The protein localises to the cytoplasm. It carries out the reaction 5-[(5-phospho-1-deoxy-D-ribulos-1-ylimino)methylamino]-1-(5-phospho-beta-D-ribosyl)imidazole-4-carboxamide + L-glutamine = D-erythro-1-(imidazol-4-yl)glycerol 3-phosphate + 5-amino-1-(5-phospho-beta-D-ribosyl)imidazole-4-carboxamide + L-glutamate + H(+). Its pathway is amino-acid biosynthesis; L-histidine biosynthesis; L-histidine from 5-phospho-alpha-D-ribose 1-diphosphate: step 5/9. IGPS catalyzes the conversion of PRFAR and glutamine to IGP, AICAR and glutamate. The HisF subunit catalyzes the cyclization activity that produces IGP and AICAR from PRFAR using the ammonia provided by the HisH subunit. The chain is Imidazole glycerol phosphate synthase subunit HisF from Bacillus cereus (strain AH187).